The sequence spans 160 residues: S-adenosylmethionine decarboxylase proenzyme (160 aa).

The active-site Schiff-base intermediate with substrate; via pyruvic acid is the serine 73. The residue at position 73 (serine 73) is a Pyruvic acid (Ser); by autocatalysis. The active-site Proton acceptor; for processing activity is histidine 78. Cysteine 93 functions as the Proton donor; for catalytic activity in the catalytic mechanism.

The protein belongs to the prokaryotic AdoMetDC family. Type 1 subfamily. In terms of assembly, heterotetramer of two alpha and two beta chains arranged as a dimer of alpha/beta heterodimers. Pyruvate is required as a cofactor. Is synthesized initially as an inactive proenzyme. Formation of the active enzyme involves a self-maturation process in which the active site pyruvoyl group is generated from an internal serine residue via an autocatalytic post-translational modification. Two non-identical subunits are generated from the proenzyme in this reaction, and the pyruvate is formed at the N-terminus of the alpha chain, which is derived from the carboxyl end of the proenzyme. The post-translation cleavage follows an unusual pathway, termed non-hydrolytic serinolysis, in which the side chain hydroxyl group of the serine supplies its oxygen atom to form the C-terminus of the beta chain, while the remainder of the serine residue undergoes an oxidative deamination to produce ammonia and the pyruvoyl group blocking the N-terminus of the alpha chain.

The enzyme catalyses S-adenosyl-L-methionine + H(+) = S-adenosyl 3-(methylsulfanyl)propylamine + CO2. The protein operates within amine and polyamine biosynthesis; S-adenosylmethioninamine biosynthesis; S-adenosylmethioninamine from S-adenosyl-L-methionine: step 1/1. In terms of biological role, catalyzes the decarboxylation of S-adenosylmethionine to S-adenosylmethioninamine (dcAdoMet), the propylamine donor required for the synthesis of the polyamines spermine and spermidine from the diamine putrescine. The chain is S-adenosylmethionine decarboxylase proenzyme from Pseudomonas aeruginosa (strain LESB58).